The sequence spans 811 residues: LPS-assembly protein LptD (811 aa).

Positions 1 to 17 are cleaved as a signal peptide; it reads MTEPNRARKTRQRTAFA. The disordered stretch occupies residues 1–22; it reads MTEPNRARKTRQRTAFAAPDQR.

Belongs to the LptD family. Component of the lipopolysaccharide transport and assembly complex. Interacts with LptE and LptA.

The protein localises to the cell outer membrane. Together with LptE, is involved in the assembly of lipopolysaccharide (LPS) at the surface of the outer membrane. In Ralstonia nicotianae (strain ATCC BAA-1114 / GMI1000) (Ralstonia solanacearum), this protein is LPS-assembly protein LptD.